The sequence spans 508 residues: Sugar transport protein 12 (508 aa).

At 1–22 the chain is on the cytoplasmic side; that stretch reads MPSVGIVIGDGKKEYPGKLTLY. Transmembrane regions (helical) follow at residues 23-43, 80-100, 118-138, 141-161, 172-192, 201-221, 294-314, 317-337, 347-367, 383-403, 426-446, and 451-471; these read VTVTCIVAAMGGLIFGYDIGI, VSLTLFTSSLYLAALCSSLVA, VLFCAGALLNGFATAVWMLIV, LLLGFGIGFTNQSVPLYLSEM, IGFQLSITIGILVANVLNFFF, LSLGGAVVPALIITVGSLILP, LTGINVIMFYAPVLFQTIGFG, AALISAVVTGLVNVGATVVSI, FLFLEGGFQMLISQVAVAAAI, WYAIVVVLFICIYVAAFAWSW, ITVSVNMIFTFLIAQVFLMML, and FGLFIFFAFFVVVMSIFVYLF. At 472-508 the chain is on the cytoplasmic side; it reads LPETRGVPIEEMNRVWRSHWYWSKFVDAEKNLTKVVI.

Belongs to the major facilitator superfamily. Sugar transporter (TC 2.A.1.1) family.

The protein resides in the membrane. In terms of biological role, mediates an active uptake of hexoses, probably by sugar/hydrogen symport. This chain is Sugar transport protein 12 (STP12), found in Arabidopsis thaliana (Mouse-ear cress).